Consider the following 40-residue polypeptide: Natriuretic peptide HsNP-b (40 aa).

Positions 1-8 (SGSKTAKI) are excised as a propeptide. The tract at residues 1–40 (SGSKTAKIGDGCFGVPIDHIGSTTDLGCGRPRPKPTPRGS) is disordered. Cysteines 12 and 28 form a disulfide. Over residues 31 to 40 (PRPKPTPRGS) the composition is skewed to basic residues.

Belongs to the natriuretic peptide family. In terms of tissue distribution, expressed by the venom gland.

The protein localises to the secreted. Snake venom natriuretic peptide that targets both NPR1 and NPR2. Exhibits hypotensive and vasodepressor activities. This chain is Natriuretic peptide HsNP-b, found in Hoplocephalus stephensii (Stephens's banded snake).